The sequence spans 332 residues: Ferredoxin--NADP reductase 2 (332 aa).

Residues D33, Q41, Y46, V86, I121, D282, and S325 each contribute to the FAD site.

Belongs to the ferredoxin--NADP reductase type 2 family. In terms of assembly, homodimer. The cofactor is FAD.

The enzyme catalyses 2 reduced [2Fe-2S]-[ferredoxin] + NADP(+) + H(+) = 2 oxidized [2Fe-2S]-[ferredoxin] + NADPH. This is Ferredoxin--NADP reductase 2 from Sulfolobus acidocaldarius (strain ATCC 33909 / DSM 639 / JCM 8929 / NBRC 15157 / NCIMB 11770).